Consider the following 195-residue polypeptide: Orotate phosphoribosyltransferase (195 aa).

117–125 contacts 5-phospho-alpha-D-ribose 1-diphosphate; sequence EDITTTGGS. Orotate contacts are provided by T121 and R149.

It belongs to the purine/pyrimidine phosphoribosyltransferase family. PyrE subfamily. In terms of assembly, homodimer. The cofactor is Mg(2+).

It carries out the reaction orotidine 5'-phosphate + diphosphate = orotate + 5-phospho-alpha-D-ribose 1-diphosphate. It functions in the pathway pyrimidine metabolism; UMP biosynthesis via de novo pathway; UMP from orotate: step 1/2. In terms of biological role, catalyzes the transfer of a ribosyl phosphate group from 5-phosphoribose 1-diphosphate to orotate, leading to the formation of orotidine monophosphate (OMP). In Acidithiobacillus ferrooxidans (strain ATCC 53993 / BNL-5-31) (Leptospirillum ferrooxidans (ATCC 53993)), this protein is Orotate phosphoribosyltransferase.